A 145-amino-acid polypeptide reads, in one-letter code: Large ribosomal subunit protein uL15 (145 aa).

Residues 1–13 (MIRSKRKINKLRG) show a composition bias toward basic residues. A disordered region spans residues 1-44 (MIRSKRKINKLRGSRSNGGGCTKKRRGAGNKGGRGNAGASKQHW).

Belongs to the universal ribosomal protein uL15 family. Part of the 50S ribosomal subunit.

In terms of biological role, binds to the 23S rRNA. This Methanobrevibacter smithii (strain ATCC 35061 / DSM 861 / OCM 144 / PS) protein is Large ribosomal subunit protein uL15.